We begin with the raw amino-acid sequence, 93 residues long: Integration host factor subunit beta (93 aa).

The protein belongs to the bacterial histone-like protein family. Heterodimer of an alpha and a beta chain.

Its function is as follows. This protein is one of the two subunits of integration host factor, a specific DNA-binding protein that functions in genetic recombination as well as in transcriptional and translational control. The polypeptide is Integration host factor subunit beta (Aliivibrio salmonicida (strain LFI1238) (Vibrio salmonicida (strain LFI1238))).